The sequence spans 210 residues: NADH dehydrogenase [ubiquinone] iron-sulfur protein 8, mitochondrial (210 aa).

A mitochondrion-targeting transit peptide spans 1 to 34; sequence MRCLTTPVLLRALAQAARAGPPGGRSLHSSAVAA. 2 4Fe-4S ferredoxin-type domains span residues 102–131 and 141–170; these read RRYP…IEAE and TRYD…EGPN. Residues cysteine 111, cysteine 114, cysteine 117, cysteine 121, cysteine 150, cysteine 153, cysteine 156, and cysteine 160 each coordinate [4Fe-4S] cluster.

This sequence belongs to the complex I 23 kDa subunit family. As to quaternary structure, core subunit of respiratory chain NADH dehydrogenase (Complex I) which is composed of 45 different subunits. This is a component of the iron-sulfur (IP) fragment of the enzyme. Interacts with RAB5IF. The cofactor is [4Fe-4S] cluster.

Its subcellular location is the mitochondrion inner membrane. The enzyme catalyses a ubiquinone + NADH + 5 H(+)(in) = a ubiquinol + NAD(+) + 4 H(+)(out). In terms of biological role, core subunit of the mitochondrial membrane respiratory chain NADH dehydrogenase (Complex I) which catalyzes electron transfer from NADH through the respiratory chain, using ubiquinone as an electron acceptor. Essential for the catalytic activity and assembly of complex I. The protein is NADH dehydrogenase [ubiquinone] iron-sulfur protein 8, mitochondrial (NDUFS8) of Gorilla gorilla gorilla (Western lowland gorilla).